The chain runs to 120 residues: Ubiquitin domain-containing protein TINCR (120 aa).

Residues 14–83 (YHIKVHLADE…LQDGSVLLLV (70 aa)) enclose the Ubiquitin-like domain.

In terms of tissue distribution, detected in stratum corneum (at protein level).

The protein is Ubiquitin domain-containing protein TINCR of Homo sapiens (Human).